Consider the following 1608-residue polypeptide: Mitogen-activated protein kinase kinase kinase 4 (1608 aa).

Low complexity predominate over residues 1 to 23 (MREAAAALVPPPAFAVTPAAAME). 2 disordered regions span residues 1 to 136 (MREA…ENVE) and 429 to 478 (IPSP…RQPI). Residues 24 to 37 (EPPPPPPPPPPPPE) show a composition bias toward pro residues. Acidic residues predominate over residues 66 to 76 (SDLEDFSDETN). Position 84 is a phosphoserine (serine 84). The segment covering 91 to 101 (QMKRMSTKHQR) has biased composition (basic residues). A Phosphoserine modification is found at serine 431. Threonine 447 carries the phosphothreonine modification. Phosphoserine is present on residues serine 456 and serine 457. A compositionally biased stretch (acidic residues) spans 456–466 (SSTDESEEEQI). Threonine 458 carries the post-translational modification Phosphothreonine. Residues serine 461, serine 481, and serine 499 each carry the phosphoserine modification. Disordered regions lie at residues 1157–1190 (CHSDPPNPHLIIPTPEGFSTRSMPSDARSHGSPA), 1202–1231 (ASRPSPSGGDSVLPKSISSAHDTRGSSVPE), and 1244–1274 (FRSLSRHSSPTEERDEPAYPRGDSSGSTRRS). Positions 1217–1230 (SISSAHDTRGSSVP) are enriched in polar residues. A phosphoserine mark is found at serine 1252 and serine 1274. The segment covering 1252–1261 (SPTEERDEPA) has biased composition (basic and acidic residues). A Protein kinase domain is found at 1343-1601 (WQRGNKIGEG…ASQLLDHSFV (259 aa)). ATP contacts are provided by residues 1349–1357 (IGEGQYGKV) and lysine 1372. Catalysis depends on aspartate 1463, which acts as the Proton acceptor.

The protein belongs to the protein kinase superfamily. STE Ser/Thr protein kinase family. MAP kinase kinase kinase subfamily. In terms of assembly, monomer and homodimer. Homodimerization enhances kinase activity. Interacts with TRAF4; this promotes homodimerization. Binds both upstream activators and downstream substrates in multimolecular complexes. Interacts with AXIN1 and DIXDC1; interaction with DIXDC1 prevents interaction with AXIN1. Interacts with GADD45 and MAP2K6. Interacts with ZFP36; this interaction enhances the association with SH3KBP1/CIN85. Interacts with SH3KBP1; this interaction enhances the association with ZFP36. Interacts with CDC42. It depends on Mg(2+) as a cofactor. In terms of tissue distribution, expressed at high levels in heart, placenta, skeletal muscle and pancreas, and at lower levels in other tissues.

It localises to the cytoplasm. Its subcellular location is the perinuclear region. It carries out the reaction L-seryl-[protein] + ATP = O-phospho-L-seryl-[protein] + ADP + H(+). The enzyme catalyses L-threonyl-[protein] + ATP = O-phospho-L-threonyl-[protein] + ADP + H(+). N-terminal autoinhibitory domain interacts with the C-terminal kinase domain, inhibiting kinase activity, and preventing interaction with its substrate, MAP2K6. The GADD45 proteins activate the kinase by binding to the N-terminal domain. Activated by phosphorylation on Thr-1505. Its function is as follows. Component of a protein kinase signal transduction cascade. Activates the CSBP2, P38 and JNK MAPK pathways, but not the ERK pathway. Specifically phosphorylates and activates MAP2K4 and MAP2K6. This chain is Mitogen-activated protein kinase kinase kinase 4 (MAP3K4), found in Homo sapiens (Human).